The chain runs to 60 residues: Large ribosomal subunit protein bL32 (60 aa).

The segment covering M1–L22 has biased composition (basic residues). The interval M1–Y27 is disordered.

The protein belongs to the bacterial ribosomal protein bL32 family.

This is Large ribosomal subunit protein bL32 from Rhodospirillum centenum (strain ATCC 51521 / SW).